The primary structure comprises 229 residues: Probable coenzyme A transferase subunit alpha (229 aa).

26–32 lines the CoA pocket; the sequence is GGFGGVG.

The protein belongs to the 3-oxoacid CoA-transferase subunit A family. As to quaternary structure, heterodimer of a subunit alpha and a subunit beta.

The protein is Probable coenzyme A transferase subunit alpha (yodS) of Bacillus subtilis (strain 168).